Consider the following 87-residue polypeptide: UPF0250 protein CKO_02527 (87 aa).

The protein belongs to the UPF0250 family.

This Citrobacter koseri (strain ATCC BAA-895 / CDC 4225-83 / SGSC4696) protein is UPF0250 protein CKO_02527.